Consider the following 360-residue polypeptide: MSKQILILPGDGIGPEIMTEAVKVLELANQKYQLGFELTHDVIGGAAIDKHGVPLADETLDRARAADAVLLGAVGGPKWDTIERDIRPERGLLKIRSQLGLFGNLRPAILYPQLADASSLKPEIVAGLDILIVRELTGGIYFGAPRGTRVLDNGERQAYDTLPYSESEIRRIAKVGFDMAMVRGKKLCSVDKANVLASSQLWREIVEQVAKDYPEVELSHLYVDNAAMQLVRAPKQFDVIVTDNLFGDILSDQASMLTGSIGMLPSASLDTANKGMYEPCHGSAPDIAGQGIANPLATILSVSMMLRYSFNLTAAADAIEQAVSLVLDQGIRTGDIWSEGKVKVGTKEMGDAVVAALRNL.

Position 76–89 (76–89 (GPKWDTIERDIRPE)) interacts with NAD(+). Substrate contacts are provided by arginine 96, arginine 106, arginine 134, and aspartate 224. Mg(2+) contacts are provided by aspartate 224, aspartate 248, and aspartate 252. NAD(+) is bound at residue 282 to 294 (GSAPDIAGQGIAN).

The protein belongs to the isocitrate and isopropylmalate dehydrogenases family. LeuB type 1 subfamily. Homodimer. The cofactor is Mg(2+). Requires Mn(2+) as cofactor.

It localises to the cytoplasm. It catalyses the reaction (2R,3S)-3-isopropylmalate + NAD(+) = 4-methyl-2-oxopentanoate + CO2 + NADH. The protein operates within amino-acid biosynthesis; L-leucine biosynthesis; L-leucine from 3-methyl-2-oxobutanoate: step 3/4. Catalyzes the oxidation of 3-carboxy-2-hydroxy-4-methylpentanoate (3-isopropylmalate) to 3-carboxy-4-methyl-2-oxopentanoate. The product decarboxylates to 4-methyl-2 oxopentanoate. The sequence is that of 3-isopropylmalate dehydrogenase from Pseudomonas syringae pv. tomato (strain ATCC BAA-871 / DC3000).